A 713-amino-acid polypeptide reads, in one-letter code: Acetyl-coenzyme A synthetase 1 (713 aa).

Residues 1 to 39 form a disordered region; sequence MSPSAVQSSKLEEQSSEIDKLKAKMSQSAATAQQKKEHE. The segment covering 10 to 22 has biased composition (basic and acidic residues); the sequence is KLEEQSSEIDKLK. CoA contacts are provided by residues 248–251 and threonine 367; that span reads RGGK. ATP contacts are provided by residues 443-445, 467-472, aspartate 559, and arginine 574; these read GEP and DTYWQT. The short motif at 552–600 is the FACS element; that stretch reads PGYYFTGDGAAKDKDGYIWILGRVDDVVNVSGHRLSTAEIEAAIIEDPI. Serine 582 is a binding site for CoA. Residue arginine 585 participates in ATP binding. Residue arginine 650 participates in CoA binding. A Microbody targeting signal motif is present at residues 711 to 713; sequence VKL.

Belongs to the ATP-dependent AMP-binding enzyme family.

The protein resides in the microsome. The protein localises to the cytoplasm. It localises to the mitochondrion. Its subcellular location is the nucleus. The catalysed reaction is acetate + ATP + CoA = acetyl-CoA + AMP + diphosphate. Catalyzes the production of acetyl-CoA. Provides the acetyl-CoA source for histone acetylation in the nucleus. 'Aerobic' isozyme of acetyl-coenzyme A synthetase, which supports growth on nonfermentable carbon sources such as glycerol and ethanol. May be required for assimilation of ethanol and acetate. In Saccharomyces cerevisiae (strain ATCC 204508 / S288c) (Baker's yeast), this protein is Acetyl-coenzyme A synthetase 1 (ACS1).